A 164-amino-acid chain; its full sequence is Putative 4-hydroxy-4-methyl-2-oxoglutarate aldolase (164 aa).

Substrate contacts are provided by residues 80–83 (GGNL) and Arg102. A divalent metal cation is bound at residue Asp103.

It belongs to the class II aldolase/RraA-like family. Homotrimer. The cofactor is a divalent metal cation.

The catalysed reaction is 4-hydroxy-4-methyl-2-oxoglutarate = 2 pyruvate. It carries out the reaction oxaloacetate + H(+) = pyruvate + CO2. Catalyzes the aldol cleavage of 4-hydroxy-4-methyl-2-oxoglutarate (HMG) into 2 molecules of pyruvate. Also contains a secondary oxaloacetate (OAA) decarboxylase activity due to the common pyruvate enolate transition state formed following C-C bond cleavage in the retro-aldol and decarboxylation reactions. This chain is Putative 4-hydroxy-4-methyl-2-oxoglutarate aldolase, found in Burkholderia multivorans (strain ATCC 17616 / 249).